Here is a 214-residue protein sequence, read N- to C-terminus: Protein DMP6 (214 aa).

The next 4 helical transmembrane spans lie at 52–72, 83–103, 143–163, and 178–198; these read LANL…PICT, FMTA…SFTD, FIDF…VLFD, and VVEL…MVFA.

This sequence belongs to the plant DMP1 protein family. Expressed constitutively in leaves, stems, flowers, siliques and roots (e.g. root hairs).

Its subcellular location is the vacuole membrane. Functionally, involved in membrane remodeling. The sequence is that of Protein DMP6 from Arabidopsis thaliana (Mouse-ear cress).